The sequence spans 104 residues: Co-chaperonin GroES 5 (104 aa).

The protein belongs to the GroES chaperonin family. In terms of assembly, heptamer of 7 subunits arranged in a ring. Interacts with the chaperonin GroEL.

The protein localises to the cytoplasm. In terms of biological role, together with the chaperonin GroEL, plays an essential role in assisting protein folding. The GroEL-GroES system forms a nano-cage that allows encapsulation of the non-native substrate proteins and provides a physical environment optimized to promote and accelerate protein folding. GroES binds to the apical surface of the GroEL ring, thereby capping the opening of the GroEL channel. The sequence is that of Co-chaperonin GroES 5 from Rhizobium meliloti (strain 1021) (Ensifer meliloti).